Here is a 500-residue protein sequence, read N- to C-terminus: Aspartyl/glutamyl-tRNA(Asn/Gln) amidotransferase subunit B (500 aa).

Belongs to the GatB/GatE family. GatB subfamily. As to quaternary structure, heterotrimer of A, B and C subunits.

It carries out the reaction L-glutamyl-tRNA(Gln) + L-glutamine + ATP + H2O = L-glutaminyl-tRNA(Gln) + L-glutamate + ADP + phosphate + H(+). It catalyses the reaction L-aspartyl-tRNA(Asn) + L-glutamine + ATP + H2O = L-asparaginyl-tRNA(Asn) + L-glutamate + ADP + phosphate + 2 H(+). Allows the formation of correctly charged Asn-tRNA(Asn) or Gln-tRNA(Gln) through the transamidation of misacylated Asp-tRNA(Asn) or Glu-tRNA(Gln) in organisms which lack either or both of asparaginyl-tRNA or glutaminyl-tRNA synthetases. The reaction takes place in the presence of glutamine and ATP through an activated phospho-Asp-tRNA(Asn) or phospho-Glu-tRNA(Gln). The sequence is that of Aspartyl/glutamyl-tRNA(Asn/Gln) amidotransferase subunit B from Brucella anthropi (strain ATCC 49188 / DSM 6882 / CCUG 24695 / JCM 21032 / LMG 3331 / NBRC 15819 / NCTC 12168 / Alc 37) (Ochrobactrum anthropi).